A 490-amino-acid polypeptide reads, in one-letter code: Glutamyl-tRNA(Gln) amidotransferase subunit A (490 aa).

Residues Lys79 and Ser154 each act as charge relay system in the active site. The Acyl-ester intermediate role is filled by Ser178.

It belongs to the amidase family. GatA subfamily. In terms of assembly, heterotrimer of A, B and C subunits.

It carries out the reaction L-glutamyl-tRNA(Gln) + L-glutamine + ATP + H2O = L-glutaminyl-tRNA(Gln) + L-glutamate + ADP + phosphate + H(+). Allows the formation of correctly charged Gln-tRNA(Gln) through the transamidation of misacylated Glu-tRNA(Gln) in organisms which lack glutaminyl-tRNA synthetase. The reaction takes place in the presence of glutamine and ATP through an activated gamma-phospho-Glu-tRNA(Gln). The sequence is that of Glutamyl-tRNA(Gln) amidotransferase subunit A from Roseiflexus castenholzii (strain DSM 13941 / HLO8).